We begin with the raw amino-acid sequence, 336 residues long: UDP-3-O-acylglucosamine N-acyltransferase (336 aa).

The Proton acceptor role is filled by His233.

The protein belongs to the transferase hexapeptide repeat family. LpxD subfamily. In terms of assembly, homotrimer.

It carries out the reaction a UDP-3-O-[(3R)-3-hydroxyacyl]-alpha-D-glucosamine + a (3R)-hydroxyacyl-[ACP] = a UDP-2-N,3-O-bis[(3R)-3-hydroxyacyl]-alpha-D-glucosamine + holo-[ACP] + H(+). It functions in the pathway bacterial outer membrane biogenesis; LPS lipid A biosynthesis. Its function is as follows. Catalyzes the N-acylation of UDP-3-O-acylglucosamine using 3-hydroxyacyl-ACP as the acyl donor. Is involved in the biosynthesis of lipid A, a phosphorylated glycolipid that anchors the lipopolysaccharide to the outer membrane of the cell. This Helicobacter pylori (strain HPAG1) protein is UDP-3-O-acylglucosamine N-acyltransferase.